The following is a 251-amino-acid chain: uncharacterized protein (251 aa).

A Response regulatory domain is found at 3 to 118 (KVVICDDERI…QLEHILDILV (116 aa)). Aspartate 55 is subject to 4-aspartylphosphate. Residues 152–249 (NQILSQIKQH…HMSPSDYNKL (98 aa)) form the HTH araC/xylS-type domain. 2 consecutive DNA-binding regions (H-T-H motif) follow at residues 169-190 (LDLI…KEHV) and 216-239 (HYEI…KKYL).

Post-translationally, phosphorylated by SE_0166.

The protein localises to the cytoplasm. Probable member of the two-component regulatory system SE_0166/SE_0165. This is an uncharacterized protein from Staphylococcus epidermidis (strain ATCC 12228 / FDA PCI 1200).